We begin with the raw amino-acid sequence, 308 residues long: Protoheme IX farnesyltransferase (308 aa).

8 helical membrane passes run 31 to 51 (VIELLLVTAIPAMLLAQRGTV), 53 to 73 (PLLIVNTLIGGMLAAGGANAL), 102 to 122 (NALVFGLVLTAGSFLWLWWTT), 124 to 144 (LLSGLLALATIAFYVFIYTLL), 149 to 169 (TSQNVVWGGAAGCMPVMIGWS), 170 to 190 (AVTGTIQWPALVMFAIIFFWT), 240 to 260 (LALATGWLYAAVAVVAGVWFL), and 288 to 308 (YLAVVFCALAIDSAIGLPHLF).

The protein belongs to the UbiA prenyltransferase family. Protoheme IX farnesyltransferase subfamily.

It is found in the cell membrane. The catalysed reaction is heme b + (2E,6E)-farnesyl diphosphate + H2O = Fe(II)-heme o + diphosphate. The protein operates within porphyrin-containing compound metabolism; heme O biosynthesis; heme O from protoheme: step 1/1. In terms of biological role, converts heme B (protoheme IX) to heme O by substitution of the vinyl group on carbon 2 of heme B porphyrin ring with a hydroxyethyl farnesyl side group. This chain is Protoheme IX farnesyltransferase, found in Mycobacterium avium (strain 104).